A 46-amino-acid chain; its full sequence is Crambin (46 aa).

Cystine bridges form between Cys-3–Cys-40, Cys-4–Cys-32, and Cys-16–Cys-26.

The protein belongs to the plant thionin (TC 1.C.44) family.

The protein resides in the secreted. Its function is as follows. The function of this hydrophobic plant seed protein is not known. The protein is Crambin (THI2) of Crambe hispanica subsp. abyssinica (Abyssinian kale).